The primary structure comprises 132 residues: Intraflagellar transport protein 20 homolog (132 aa).

The tract at residues 70–132 (MKAIGARNLL…EFIDQFIFQK (63 aa)) is IFT57-binding. The stretch at 74–116 (GARNLLKSIAKQREAQQQQLQALIAEKKTQLERYRVEYEALCK) forms a coiled coil.

As to quaternary structure, component of the IFT complex B, at least composed of IFT20, IFT22, IFT25, IFT27, IFT46, IFT52, TRAF3IP1/IFT54, IFT57, IFT74, IFT80, IFT81, and IFT88. Interacts directly with IFT57 and KIF3B/Kinesin II subunit. Interacts with IFT88. Interacts with CEP83. Interacts with SPEF2 (via C-terminus). Interacts with CBL and CBLB. Interacts with TRIP11. Interacts with TTC21A. Interacts with SPATA1. Interacts with USH1G. Interacts with CCDC146. Interacts with CEP78; regulating IFT20 stability and localization. As to expression, expressed predominantly in the testis (at protein level). Expressed in kidney and retina. Expression is up-regulated during spermiogenesis.

It is found in the golgi apparatus. The protein resides in the cis-Golgi network. It localises to the cytoplasm. The protein localises to the cytoskeleton. Its subcellular location is the microtubule organizing center. It is found in the centrosome. The protein resides in the centriole. It localises to the cilium basal body. The protein localises to the cell projection. Its subcellular location is the cilium. It is found in the cytoplasmic vesicle. The protein resides in the secretory vesicle. It localises to the acrosome. In terms of biological role, part of intraflagellar transport (IFT) particles involved in ciliary process assembly. May play a role in the trafficking of ciliary membrane proteins from the Golgi complex to the cilium. Regulates the ciliary platelet-derived growth factor receptor-alpha (PDGFRA) signaling pathway. Required for protein stability of E3 ubiquitin ligases CBL and CBLB that mediate ubiquitination and internalization of PDGFRA for proper feedback inhibition of PDGFRA signaling. Essential for male fertility. Plays an important role in spermatogenesis, particularly spermiogenesis, when germ cells form flagella. May play a role in the transport of flagellar proteins ODF2 and SPAG16 to build sperm flagella and in the removal of redundant sperm cytoplasm. Also involved in autophagy since it is required for trafficking of ATG16L and the expansion of the autophagic compartment. This chain is Intraflagellar transport protein 20 homolog (Ift20), found in Mus musculus (Mouse).